The primary structure comprises 620 residues: Arginine--tRNA ligase (620 aa).

Residues 147–157 (ANPTGPIHIGG) carry the 'HIGH' region motif.

Belongs to the class-I aminoacyl-tRNA synthetase family. Monomer.

Its subcellular location is the cytoplasm. It catalyses the reaction tRNA(Arg) + L-arginine + ATP = L-arginyl-tRNA(Arg) + AMP + diphosphate. In Bifidobacterium longum (strain NCC 2705), this protein is Arginine--tRNA ligase.